Here is a 298-residue protein sequence, read N- to C-terminus: Elongation factor Ts (298 aa).

The segment at 79–82 is involved in Mg(2+) ion dislocation from EF-Tu; that stretch reads TDFV.

Belongs to the EF-Ts family.

The protein localises to the cytoplasm. Functionally, associates with the EF-Tu.GDP complex and induces the exchange of GDP to GTP. It remains bound to the aminoacyl-tRNA.EF-Tu.GTP complex up to the GTP hydrolysis stage on the ribosome. The sequence is that of Elongation factor Ts from Cereibacter sphaeroides (strain ATCC 17025 / ATH 2.4.3) (Rhodobacter sphaeroides).